Consider the following 465-residue polypeptide: Na(+)-translocating NADH-quinone reductase subunit A (465 aa).

Belongs to the NqrA family. In terms of assembly, composed of six subunits; NqrA, NqrB, NqrC, NqrD, NqrE and NqrF.

The catalysed reaction is a ubiquinone + n Na(+)(in) + NADH + H(+) = a ubiquinol + n Na(+)(out) + NAD(+). Its function is as follows. NQR complex catalyzes the reduction of ubiquinone-1 to ubiquinol by two successive reactions, coupled with the transport of Na(+) ions from the cytoplasm to the periplasm. NqrA to NqrE are probably involved in the second step, the conversion of ubisemiquinone to ubiquinol. The chain is Na(+)-translocating NADH-quinone reductase subunit A from Chlamydia muridarum (strain MoPn / Nigg).